The sequence spans 384 residues: MNSNYTILNIRAHSWAEKDNLVFPTITKPVSNGWFAWSPIGQFEPNSQKVPYVVVPPSIKFPISLRYKDSPPKLEKKPNIFLDNMLQYIESSSYMYVMVRNNQQAQLNANIVCTSEVLELMMCAPYEKKTGWSLGVTRYRNTMYICRIDVEQPDPIDQDNLKRAMQEFWLRNLRTHCVFENGIKMHQHNQSSEEHLRFHGVFSFDLNGNRVLFDSPVLAEMPSTTLNGSALSWVDLQIRPMFMSRLDWPEHNRTEALKWWVKCFLLGIESLYIARRDENAHVHNIEKTLVRDLWKSCEKDWSPTVCANFMIYLLNCISQVMAPIDCPSTVYLFQFDASQGTVSYKGLRGRNQYTFVSDWFRMMLDDHTNDMCKTPNLQTMSSIV.

The protein belongs to the DXO/Dom3Z family. In terms of assembly, component of the Rhino-Deadlock-Cutoff (RDC) complex, composed of rhi/rhino, del/deadlock and cuff/cutoff. Interacts with rhi/rhino; this interaction is indirect and is mediated by del/deadlock. Interacts with del/deadlock (via C-terminal); this interaction is direct. Interacts with Rat1.

Its subcellular location is the cytoplasm. It localises to the nucleus. The protein localises to the chromosome. Involved in the piRNA pathway in germline tissues. Part of the Rhino-Deadlock-Cutoff (RDC) complex that stimulates piRNA biogenesis from chromatin regions corresponding to dual-strand, but not single-stranded, piRNA clusters. Promotes transcription of long piRNA precursors by preventing termination at canonical poly(A) sites. As part of the RDC complex, is recruited to chromatin enriched in histone modification H3K9me3 and might contribute to complex interaction by binding nascent transcript nucleic acid chains. Associates with chromatin upon exposure to homologous piRNA. Suppresses cleavage at canonical poly(A) sites by blocking recruitment of the cleavage and polyadenylation specificity factor (CPSF) complex and prevents transcriptional termination by RNA polymerase II, facilitating transcriptional read-through. As part of the RDC complex, involved in suppression of splicing. Catalytically inactive, lacking 5'-3' exonuclease and pyrophosphohydrolase activities. Stabilizes uncapped piRNA precursors in the nucleus, probably by sequestering or blocking the exonuclease activity of Rat1. May also be involved in siRNA biogenesis from dual-strand piRNA clusters. This Drosophila melanogaster (Fruit fly) protein is Protein cutoff (cuff).